The chain runs to 328 residues: m7GpppN-mRNA hydrolase NUDT17 (328 aa).

Residues 90–236 (GVDLGVAVIL…DGTETPGLLP (147 aa)) form the Nudix hydrolase domain. Positions 127 to 148 (GHVELEEELLDGGLRELWEESG) match the Nudix box motif. Positions 142 and 146 each coordinate Mg(2+). A disordered region spans residues 299 to 328 (PCKSAAYLDPGPAKEEWNMDPLPPNQGSGK).

This sequence belongs to the Nudix hydrolase family. Mg(2+) serves as cofactor. Requires Mn(2+) as cofactor.

It catalyses the reaction a 5'-end (N(7)-methyl 5'-triphosphoguanosine)-ribonucleoside in mRNA + H2O = N(7)-methyl-GDP + a 5'-end phospho-ribonucleoside in mRNA + 2 H(+). In terms of biological role, acts as a decapping enzyme capable of hydrolyzing monomethylated capped RNAs (in vitro). Hydrolyzes monomethylated capped RNA after alpha and beta phosphates to form N(7)-methyl-GDP. Shows low activity towards unmethylated capped RNA. This chain is m7GpppN-mRNA hydrolase NUDT17 (NUDT17), found in Homo sapiens (Human).